Consider the following 426-residue polypeptide: Glutamate-1-semialdehyde 2,1-aminomutase (426 aa).

Lysine 265 carries the post-translational modification N6-(pyridoxal phosphate)lysine.

This sequence belongs to the class-III pyridoxal-phosphate-dependent aminotransferase family. HemL subfamily. As to quaternary structure, homodimer. Pyridoxal 5'-phosphate serves as cofactor.

It localises to the cytoplasm. The enzyme catalyses (S)-4-amino-5-oxopentanoate = 5-aminolevulinate. It participates in porphyrin-containing compound metabolism; protoporphyrin-IX biosynthesis; 5-aminolevulinate from L-glutamyl-tRNA(Glu): step 2/2. This is Glutamate-1-semialdehyde 2,1-aminomutase from Escherichia coli O7:K1 (strain IAI39 / ExPEC).